A 474-amino-acid chain; its full sequence is UDP-N-acetylmuramate--L-alanine ligase (474 aa).

119 to 125 (GTHGKTT) is an ATP binding site.

The protein belongs to the MurCDEF family.

The protein resides in the cytoplasm. The enzyme catalyses UDP-N-acetyl-alpha-D-muramate + L-alanine + ATP = UDP-N-acetyl-alpha-D-muramoyl-L-alanine + ADP + phosphate + H(+). It participates in cell wall biogenesis; peptidoglycan biosynthesis. Cell wall formation. This is UDP-N-acetylmuramate--L-alanine ligase from Jannaschia sp. (strain CCS1).